Consider the following 80-residue polypeptide: Defensin-like protein 1 (80 aa).

The N-terminal stretch at 1-29 is a signal peptide; it reads MAKFASIIALLFAALVLFAAFEAPTMVEA. Q30 is modified (pyrrolidone carboxylic acid). 4 disulfide bridges follow: C33/C80, C44/C65, C50/C74, and C54/C76.

This sequence belongs to the DEFL family. As to quaternary structure, forms oligomers in its native state.

Its subcellular location is the secreted. Possesses antifungal activity sensitive to inorganic cations. This chain is Defensin-like protein 1 (AFP1), found in Raphanus sativus (Radish).